We begin with the raw amino-acid sequence, 340 residues long: Phosphatidylglycerol--prolipoprotein diacylglyceryl transferase (340 aa).

4 consecutive transmembrane segments (helical) span residues 19 to 39, 54 to 74, 93 to 113, and 119 to 139; these read IPLR…VWLG, ADIA…YHVI, IWEG…GAWI, and GIPL…AQAF. Position 141 (Arg141) interacts with a 1,2-diacyl-sn-glycero-3-phospho-(1'-sn-glycerol). A run of 3 helical transmembrane segments spans residues 176-196, 202-221, and 238-258; these read HPTF…VIWA, LGHG…GRAW, and LNDW…VLSS. Residues 266 to 340 form a disordered region; that stretch reads EIVEPGASDT…ESAAESAKKV (75 aa). Positions 284–294 are enriched in basic and acidic residues; the sequence is DLGKDEDKATT. Residues 295 to 307 are compositionally biased toward low complexity; that stretch reads DKATATDTSTTTD. Over residues 326–340 the composition is skewed to basic and acidic residues; that stretch reads PSEKTESAAESAKKV.

The protein belongs to the Lgt family.

Its subcellular location is the cell membrane. The enzyme catalyses L-cysteinyl-[prolipoprotein] + a 1,2-diacyl-sn-glycero-3-phospho-(1'-sn-glycerol) = an S-1,2-diacyl-sn-glyceryl-L-cysteinyl-[prolipoprotein] + sn-glycerol 1-phosphate + H(+). It functions in the pathway protein modification; lipoprotein biosynthesis (diacylglyceryl transfer). Functionally, catalyzes the transfer of the diacylglyceryl group from phosphatidylglycerol to the sulfhydryl group of the N-terminal cysteine of a prolipoprotein, the first step in the formation of mature lipoproteins. The chain is Phosphatidylglycerol--prolipoprotein diacylglyceryl transferase from Streptomyces avermitilis (strain ATCC 31267 / DSM 46492 / JCM 5070 / NBRC 14893 / NCIMB 12804 / NRRL 8165 / MA-4680).